The chain runs to 120 residues: LOB domain-containing protein 8 (120 aa).

Residues 8–109 (RPCCVCITKN…AYLHELEEKI (102 aa)) form the LOB domain.

Belongs to the LOB domain-containing protein family.

This chain is LOB domain-containing protein 8 (LBD8), found in Arabidopsis thaliana (Mouse-ear cress).